The chain runs to 458 residues: Argininosuccinate lyase (458 aa).

This sequence belongs to the lyase 1 family. Argininosuccinate lyase subfamily.

It localises to the cytoplasm. It catalyses the reaction 2-(N(omega)-L-arginino)succinate = fumarate + L-arginine. It functions in the pathway amino-acid biosynthesis; L-arginine biosynthesis; L-arginine from L-ornithine and carbamoyl phosphate: step 3/3. This chain is Argininosuccinate lyase, found in Vibrio cholerae serotype O1 (strain ATCC 39541 / Classical Ogawa 395 / O395).